We begin with the raw amino-acid sequence, 1330 residues long: Ubinuclein-2 (1330 aa).

Positions 1–133 are disordered; that stretch reads MAEPRRVAFI…PRETVRLELV (133 aa). At serine 13 the chain carries Phosphoserine. Composition is skewed to basic and acidic residues over residues 16–37 and 67–79; these read RRREAEFPGTEREPEYPREPPR and PREKPLPQREVSR. The segment covering 93-111 has biased composition (pro residues); it reads PEPPPPPLPQLHLQPPPPR. The segment covering 123–133 has biased composition (basic and acidic residues); it reads PPRETVRLELV. At threonine 244 the chain carries Phosphothreonine. The segment at 249-304 is disordered; the sequence is QASDTEEDDTTDNQKHKPPKIPKIKEDDIEMKKRKRKEEGEKEKKPRKKVPKQLGV. Serine 251 is subject to Phosphoserine. Threonine 253 bears the Phosphothreonine mark. Lysine 273 participates in a covalent cross-link: Glycyl lysine isopeptide (Lys-Gly) (interchain with G-Cter in SUMO2). Serine 312 carries the phosphoserine modification. The segment at 336–356 is disordered; it reads KDALKKESNPKTPLNFSTSSL. Polar residues predominate over residues 345 to 356; sequence PKTPLNFSTSSL. A phosphoserine mark is found at serine 417, serine 420, serine 423, and serine 585. Disordered regions lie at residues 574-597, 672-730, 802-833, 864-913, 938-988, 1017-1201, and 1308-1330; these read FQTDEEREKNGSEEDDEEKPGKRV, LTSA…STPV, PKKLDSTQTAHSSSLIAGHTGPVPKKPQDLAH, GLQR…VTKV, PVVK…SRTV, MAAS…GSSV, and HVQQTFNDGGQSKGDTKLPRKSQ. Basic and acidic residues-rich tracts occupy residues 575-585 and 688-699; these read QTDEEREKNGS and KVKECSPKKDQK. A compositionally biased stretch (low complexity) spans 701–730; the sequence is PASSVASVGGPSTSSSTSAVASTSSGSTPV. The span at 807 to 816 shows a compositional bias: polar residues; that stretch reads STQTAHSSSL. Positions 864 to 895 are enriched in low complexity; that stretch reads GLQRSSQIHASSSSQTHVSSSSQAQVAASSHT. Composition is skewed to polar residues over residues 896-913 and 938-956; these read LGTSEAQDASPLTQVTKV and PVVKLSNNPQLSCSSPLTK. Residues 1017–1029 show a composition bias toward low complexity; that stretch reads MAASPKLASSPKP. Residues 1030–1044 show a composition bias toward pro residues; it reads ATSPKPLPSPKPSAS. Composition is skewed to low complexity over residues 1045–1054 and 1061–1079; these read PKPSQSAKPS and SKSNPTPKPTVSPSSSSPN. Lysine 1052 bears the N6-acetyllysine mark. 3 stretches are compositionally biased toward polar residues: residues 1082–1148, 1158–1169, and 1308–1317; these read VAQS…NSLS, RGSNLNSSGANR, and HVQQTFNDGG. At serine 1107 the chain carries Phosphoserine. Residue lysine 1132 is modified to N6-acetyllysine. A compositionally biased stretch (basic and acidic residues) spans 1321–1330; it reads GDTKLPRKSQ.

It belongs to the ubinuclein family.

This Bos taurus (Bovine) protein is Ubinuclein-2 (UBN2).